The chain runs to 357 residues: Neutral protease 2 homolog BDCG_00922 (357 aa).

The signal sequence occupies residues Met-1–Ala-19. A propeptide spanning residues Gly-20–Arg-182 is cleaved from the precursor. Intrachain disulfides connect Cys-188–Cys-259, Cys-266–Cys-284, and Cys-297–Cys-357. His-308 serves as a coordination point for Zn(2+). Glu-309 is an active-site residue. The Zn(2+) site is built by His-312 and Asp-323.

The protein belongs to the peptidase M35 family. The cofactor is Zn(2+).

It localises to the secreted. It catalyses the reaction Preferential cleavage of bonds with hydrophobic residues in P1'. Also 3-Asn-|-Gln-4 and 8-Gly-|-Ser-9 bonds in insulin B chain.. Its function is as follows. Secreted metalloproteinase that allows assimilation of proteinaceous substrates. Shows high activities on basic nuclear substrates such as histone and protamine. This Ajellomyces dermatitidis (strain ER-3 / ATCC MYA-2586) (Blastomyces dermatitidis) protein is Neutral protease 2 homolog BDCG_00922.